Here is a 276-residue protein sequence, read N- to C-terminus: CASP-like protein 4A3 (276 aa).

Over residues 1 to 13 the composition is skewed to polar residues; the sequence is MPSMSPSSISTEK. Positions 1-76 are disordered; the sequence is MPSMSPSSIS…PVKIEETPSP (76 aa). Over 1 to 126 the chain is Cytoplasmic; that stretch reads MPSMSPSSIS…RRSRREEIVK (126 aa). Over residues 43 to 72 the composition is skewed to basic and acidic residues; the sequence is SLDHSSDSEKEDEKRRPESRRNKNPVKIEE. A helical membrane pass occupies residues 127-147; sequence FVALGFRLSEVVLALISFSIM. Residues 148–167 lie on the Extracellular side of the membrane; it reads AADKTKGWSGDSFDRYKEYR. Residues 168–188 traverse the membrane as a helical segment; the sequence is FCLSVNVVAFIYASFQACDLA. Residues 189 to 205 are Cytoplasmic-facing; that stretch reads YHLVKEKHLISHHLRPL. A helical transmembrane segment spans residues 206 to 226; the sequence is FEFIIDQVLAYLLMCASTAAV. Topologically, residues 227–244 are extracellular; the sequence is TRVDDWVSNWGKDDFTEM. Residues 245–265 form a helical membrane-spanning segment; that stretch reads ASASIAMSFLTFLAFAFSSLI. Over 266-276 the chain is Cytoplasmic; that stretch reads SGYNLFNQDSL.

The protein belongs to the Casparian strip membrane proteins (CASP) family. In terms of assembly, homodimer and heterodimers.

The protein localises to the cell membrane. The sequence is that of CASP-like protein 4A3 from Arabidopsis lyrata subsp. lyrata (Lyre-leaved rock-cress).